Consider the following 63-residue polypeptide: MARYRRHSRSRSRSRYRRRRRRRSRHHNRRRTYRRSRRHSRRRRRRRRGYSRRRYSRRGRRRY.

The interval 1 to 63 is disordered; it reads MARYRRHSRS…RYSRRGRRRY (63 aa).

Belongs to the protamine P1 family. As to expression, testis.

The protein localises to the nucleus. The protein resides in the chromosome. In terms of biological role, protamines substitute for histones in the chromatin of sperm during the haploid phase of spermatogenesis. They compact sperm DNA into a highly condensed, stable and inactive complex. This Sminthopsis griseoventer (Gray-bellied dunnart) protein is Sperm protamine P1 (PRM1).